The sequence spans 138 residues: Acidic phospholipase A2 6 (138 aa).

Positions 1-16 (MRTLWIMAVLLVGVEG) are cleaved as a signal peptide. 7 cysteine pairs are disulfide-bonded: C42–C131, C44–C60, C59–C111, C65–C138, C66–C104, C73–C97, and C91–C102. Ca(2+)-binding residues include Y43, G45, and G47. The active site involves H63. D64 provides a ligand contact to Ca(2+). The active site involves D105.

It belongs to the phospholipase A2 family. Group II subfamily. D49 sub-subfamily. As to quaternary structure, homodimer. It depends on Ca(2+) as a cofactor. In terms of tissue distribution, expressed by the venom gland.

It localises to the secreted. The enzyme catalyses a 1,2-diacyl-sn-glycero-3-phosphocholine + H2O = a 1-acyl-sn-glycero-3-phosphocholine + a fatty acid + H(+). In terms of biological role, snake venom phospholipase A2 (PLA2) that has high lipolytic activity. PLA2 catalyzes the calcium-dependent hydrolysis of the 2-acyl groups in 3-sn-phosphoglycerides. The protein is Acidic phospholipase A2 6 of Craspedocephalus gramineus (Bamboo pit viper).